Consider the following 43-residue polypeptide: Photosystem I reaction center subunit IX (43 aa).

A helical transmembrane segment spans residues 7 to 27 (YLSVAPVLSTLWFGSLAGLLI).

Belongs to the PsaJ family.

It is found in the plastid. The protein localises to the chloroplast thylakoid membrane. Functionally, may help in the organization of the PsaE and PsaF subunits. The chain is Photosystem I reaction center subunit IX from Aethionema cordifolium (Lebanon stonecress).